The following is a 963-amino-acid chain: Spliceosome associated factor 3, U4/U6 recycling protein (963 aa).

The span at M1 to E11 shows a compositional bias: low complexity. Disordered stretches follow at residues M1–R36 and T50–E90. A2 is subject to N-acetylalanine. The interval A2 to S351 is mediates interaction with PRPF3. Phosphoserine occurs at positions 10 and 16. Positions A14–D23 are enriched in basic and acidic residues. Positions K21 to A46 form a coiled coil. Over residues Q57–E69 the composition is skewed to acidic residues. Residues E82–Y110 are a coiled coil. HAT repeat units lie at residues G126–S158, L164–G195, G201–A237, A242–D275, G324–R356, K359–R391, V394–R430, and N487–A520. A Phosphoserine modification is found at S215. The required for interaction with USP4 stretch occupies residues N487 to A520. Positions C537–N953 are necessary and sufficient for U6 snRNA binding. The stretch at L559–G619 forms a coiled coil. Basic and acidic residues predominate over residues L590–R601. Positions L590–K694 are disordered. A required for nuclear localization region spans residues Q600–C670. Positions R601–K608 match the Nuclear localization signal motif. Positions K602 to I617 are enriched in basic residues. A compositionally biased stretch (acidic residues) spans D626–E639. S650 carries the phosphoserine modification. T657 bears the Phosphothreonine mark. Positions P677–K694 are enriched in basic and acidic residues. Residues I704–D782 form the RRM 1 domain. Phosphoserine is present on residues S769, S795, and S852. The 78-residue stretch at H801–P878 folds into the RRM 2 domain. The interval P878–L898 is disordered. The span at K882–K891 shows a compositional bias: basic and acidic residues. R906 is modified (omega-N-methylarginine). The tract at residues L920–A948 is disordered. Residues A925–A948 show a composition bias toward low complexity.

As to quaternary structure, component of the 7SK snRNP complex at least composed of P-TEFb (composed of CDK9 and CCNT1/cyclin-T1), HEXIM1, HEXIM2, BCDIN3, SART3 proteins and 7SK and U6 snRNAs. Interacts with AGO1 and AGO2. Interacts with PRPF3 and USP4; the interaction with PRPF3 is direct and recruits USP4 to its substrate PRPF3. Interacts with USP15; the interaction is direct. Interacts with HIV-1 Tat. Ubiquitously expressed.

It is found in the nucleus. The protein resides in the nucleoplasm. The protein localises to the cajal body. Its subcellular location is the nucleus speckle. It localises to the cytoplasm. Functionally, U6 snRNP-binding protein that functions as a recycling factor of the splicing machinery. Promotes the initial reassembly of U4 and U6 snRNPs following their ejection from the spliceosome during its maturation. Also binds U6atac snRNPs and may function as a recycling factor for U4atac/U6atac spliceosomal snRNP, an initial step in the assembly of U12-type spliceosomal complex. The U12-type spliceosomal complex plays a role in the splicing of introns with non-canonical splice sites. May also function as a substrate-targeting factor for deubiquitinases like USP4 and USP15. Recruits USP4 to ubiquitinated PRPF3 within the U4/U5/U6 tri-snRNP complex, promoting PRPF3 deubiquitination and thereby regulating the spliceosome U4/U5/U6 tri-snRNP spliceosomal complex disassembly. May also recruit the deubiquitinase USP15 to histone H2B and mediate histone deubiquitination, thereby regulating gene expression and/or DNA repair. May play a role in hematopoiesis probably through transcription regulation of specific genes including MYC. In terms of biological role, regulates Tat transactivation activity through direct interaction. May be a cellular factor for HIV-1 gene expression and viral replication. In Homo sapiens (Human), this protein is Spliceosome associated factor 3, U4/U6 recycling protein.